The chain runs to 96 residues: Large ribosomal subunit protein eL14 (96 aa).

The protein belongs to the eukaryotic ribosomal protein eL14 family.

The protein is Large ribosomal subunit protein eL14 of Desulfurococcus amylolyticus (strain DSM 18924 / JCM 16383 / VKM B-2413 / 1221n) (Desulfurococcus kamchatkensis).